A 381-amino-acid chain; its full sequence is Chymosin (381 aa).

The signal sequence occupies residues 1–16 (MRGFVVLLAVFALSQA). The propeptide at 17–58 (SGIVRIPLHKGKSLRRALKERGLLEDFLKNHQHAVSRKHSNS) is activation peptide. The Peptidase A1 domain occupies 74-378 (YFGKIYIGTP…DRASNLVGLA (305 aa)). The active site involves Asp-92. Copy 1 of the repeat occupies 92 to 102 (DTGSSDLWVPS). Disulfide bonds link Cys-105–Cys-110 and Cys-265–Cys-269. Asp-274 is a catalytic residue. Residues 274 to 284 (DTGTSMLVGPG) form repeat 2. Cysteines 308 and 341 form a disulfide.

Belongs to the peptidase A1 family. Monomer.

The catalysed reaction is Broad specificity similar to that of pepsin A. Clots milk by cleavage of a single 104-Ser-Phe-|-Met-Ala-107 bond in kappa-chain of casein.. Inhibited by pepstatin. Hydrolyzes a variety of proteins. The chain is Chymosin (CYM) from Callithrix jacchus (White-tufted-ear marmoset).